We begin with the raw amino-acid sequence, 662 residues long: Probable protein phosphatase 2C 4 (662 aa).

Ser153 carries the post-translational modification Phosphoserine. The PPM-type phosphatase domain occupies 249 to 653; sequence DVSLENQNLQ…DDVSIVVISL (405 aa). Residues Asp286, Gly287, Asp581, and Asp644 each coordinate Mn(2+).

This sequence belongs to the PP2C family. The cofactor is Mg(2+). Mn(2+) serves as cofactor. In terms of tissue distribution, expressed in seedlings, roots, leaves, stems, young inflorescences, flowers and siliques.

The protein resides in the nucleus. The catalysed reaction is O-phospho-L-seryl-[protein] + H2O = L-seryl-[protein] + phosphate. It catalyses the reaction O-phospho-L-threonyl-[protein] + H2O = L-threonyl-[protein] + phosphate. Involved in leaf development regulation. The protein is Probable protein phosphatase 2C 4 (PLL5) of Arabidopsis thaliana (Mouse-ear cress).